Consider the following 313-residue polypeptide: MSGGLTPDQAIDAIRGTGGAQPGCRALHAKGTLYRGTFTATRDAVMLSAAPHLDGSTVPALIRFSNGSGNPKQRDGAPGVRGMAVKFTLPDGSTTDVSAQTARLLVSSTPEGFIDLLKAMRPGLTTPLRLATHLLTHPRLLGALPLLREANRIPASYATTEYHGLHAFRWIAADGSARFVRYHLVPTAAEEYLSASDARGKDPDFLTDELAARLQDGPVRFDFRVQIAGPTDSTVDPSSAWQSTQIVTVGTVTITGPDTEREHGGDIVVFDPMRVTDGIEPSDDPVLRFRTLVYSASVKLRTGVDRGAQAPPV.

The active site involves His28. Tyr294 contributes to the heme binding site.

Belongs to the catalase family. Monomer. The cofactor is heme.

Its function is as follows. Has an organic peroxide-dependent peroxidase activity. Exhibits strong peroxidase activity using organic hydroperoxides as cosubstrates, weak peroxidase activity using hydrogen peroxide and negligible catalase activity. May have a role in elimination of reactive oxygen species, in particular by deactivating hydroperoxides. This chain is Catalase-related peroxidase, found in Mycolicibacterium paratuberculosis (strain ATCC BAA-968 / K-10) (Mycobacterium paratuberculosis).